The sequence spans 101 residues: Phosphoprotein OPG062 (101 aa).

Residues 51–73 (PSSPACERRPSSPSRCERMNNPR) are disordered. 2 positions are modified to phosphoserine: Ser53 and Ser62. Basic and acidic residues predominate over residues 56–70 (CERRPSSPSRCERMN).

This sequence belongs to the orthopoxvirus OPG062 family. In terms of assembly, self-associates to form high molecular-weight forms. Interacts with protein OPG157/A30. Interacts with host RICTOR and RPTOR; these interactions disrupt the mTORC1 and mTORC2 crosstalk. In terms of processing, phosphorylated on two serines. While these phosphorylations do not play a role in virion assembly; they are essential for the interaction with host RICTOR and RPTOR.

Its subcellular location is the virion. Plays an essential role in virion assembly and morphogenesis. Also plays a role in the inhibition of host immune response by dysregulating mTOR. Sequesters host RICTOR and RPTOR, thereby disrupting mTORC1 and mTORC2 crosstalk. In turn, blocks the host antiviral response in part through mTOR-dependent degradation of cGAS, the primary poxvirus sensor. This is Phosphoprotein OPG062 (OPG062) from Vaccinia virus (strain Western Reserve) (VACV).